Reading from the N-terminus, the 563-residue chain is Endoglucanase B (563 aa).

Positions 1–27 form a signal peptide, or 31; that stretch reads MKKFLVLLIALIMIATLLVVPGVQTSA. The active-site Proton donor is the Glu-204. Glu-363 functions as the Nucleophile in the catalytic mechanism. A disordered region spans residues 476-495; the sequence is SVTPSPSATPSPTTITAPPT. Residues 496–562 enclose the Dockerin domain; the sequence is DTVTYGDVNG…VLRSISELPY (67 aa).

It belongs to the glycosyl hydrolase 5 (cellulase A) family.

The catalysed reaction is Endohydrolysis of (1-&gt;4)-beta-D-glucosidic linkages in cellulose, lichenin and cereal beta-D-glucans.. In terms of biological role, this enzyme catalyzes the endohydrolysis of 1,4-beta-glucosidic linkages in cellulose, lichenin and cereal beta-D-glucans. The chain is Endoglucanase B (celB) from Acetivibrio thermocellus (strain ATCC 27405 / DSM 1237 / JCM 9322 / NBRC 103400 / NCIMB 10682 / NRRL B-4536 / VPI 7372) (Clostridium thermocellum).